The primary structure comprises 623 residues: MAPKVTSELLRQLRQAMRNSECVAEPIQAYIIPSGDAHQSEYIAPCDCRRAFVSGFDGSAGTAIITEEHAAMWTDGRYFLQAAKQMDNNWTLMKMGLKDTPTQEDWLVSVLPEGSRVGVDPLIIPTDYWKKMAKVLRSAGHHLVPVKENLVDKIWTDRPERPCKPLLTLGLDYTGISWKEKVADLRLKMAERSIVWFVVTALDEIAWLFNLRGSDVEHNPVFFSYAIIGLERIMLFIDGDRIDAPGVKQHLLLDLGLEAEYKIQVLPYKSILSELKTLCADLSPREKVWVSDKASYAVSEAIPKDHRCCMPYTPICIAKAVKNSAESAGMRRAHIKDAVALCELFNWLEQEVPKGGVTEISAADKAEEFRRQQADFVDLSFPTISSTGPNGAIIHYAPIPETNRTLSLDEVYLIDSGAQYKDGTTDVTRTMHFGTPTAYEKECFTYVLKGHIAVSAAVFPTGTKGHLLDSFARSALWDSGLDYLHGTGHGVGSFLNVHEGPCGISYKTFSDEPLEAGMIVTDEPGYYEDGAFGIRIENVVLVVPAKTKYNFNNRGSLTFEPLTLVPIQTKMIDVDALTDKECDWLNSYHQTCRDVIGKELQTQGRQEALEWLLRETEPISRQH.

Position 77 (arginine 77) interacts with a peptide. Position 304 is an N6-acetyllysine (lysine 304). Histidine 395 lines the a peptide pocket. Mn(2+) contacts are provided by aspartate 415, aspartate 426, and histidine 489. Residues histidine 489, histidine 498, and glutamate 523 each coordinate a peptide. Mn(2+) is bound by residues glutamate 523 and glutamate 537.

This sequence belongs to the peptidase M24B family. Homodimer. Requires Mn(2+) as cofactor. In terms of tissue distribution, expressed in all tissues tested, including liver, adrenal decapsular tissue, adrenal capsular tissue, corpus luteum, testis, submandibular gland, thymus, brain, cerebellum and heart. Highest levels in testis.

The protein localises to the cytoplasm. The enzyme catalyses Release of any N-terminal amino acid, including proline, that is linked to proline, even from a dipeptide or tripeptide.. With respect to regulation, inhibited by inositol hexakisphosphate. Metalloaminopeptidase that catalyzes the removal of a penultimate prolyl residue from the N-termini of peptides, such as Arg-Pro-Pro. Contributes to the degradation of bradykinin. This is Xaa-Pro aminopeptidase 1 from Rattus norvegicus (Rat).